A 311-amino-acid chain; its full sequence is Mycothiol acetyltransferase (311 aa).

Residue E35 participates in 1D-myo-inositol 2-(L-cysteinylamino)-2-deoxy-alpha-D-glucopyranoside binding. Position 79 to 81 (79 to 81) interacts with acetyl-CoA; that stretch reads LVV. An N-acetyltransferase domain is found at 155 to 311; sequence VRTYVGTVDD…TAYALARIDD (157 aa). 3 residues coordinate 1D-myo-inositol 2-(L-cysteinylamino)-2-deoxy-alpha-D-glucopyranoside: E180, K225, and E235. Residues 239–241 and 246–252 contribute to the acetyl-CoA site; these read LGV and QGRGLGQ. Y278 provides a ligand contact to 1D-myo-inositol 2-(L-cysteinylamino)-2-deoxy-alpha-D-glucopyranoside. 283–288 provides a ligand contact to acetyl-CoA; the sequence is NVAAAR.

This sequence belongs to the acetyltransferase family. MshD subfamily. As to quaternary structure, monomer.

The catalysed reaction is 1D-myo-inositol 2-(L-cysteinylamino)-2-deoxy-alpha-D-glucopyranoside + acetyl-CoA = mycothiol + CoA + H(+). Its function is as follows. Catalyzes the transfer of acetyl from acetyl-CoA to desacetylmycothiol (Cys-GlcN-Ins) to form mycothiol. In Mycobacterium leprae (strain Br4923), this protein is Mycothiol acetyltransferase.